The sequence spans 428 residues: MFVDKVKVYAKGGDGGNGMVAYRREKYVPDGGPAGGDGGRGASVILEVDEGLRTLMDFRYNKHFKGKRGEHGMSKNMHGKKAEDLVVKVPPGTMVTDEETGALLADLTTHGQRAVVAKGGRGGRGNVRFVTPANPAPDHAENGEPGEERNLLLELKVLADVGLVGFPSVGKSTLLSIVSAAKPKIAEYHFTTITPNLGVVDTQDGRSFVMADLPGLIEGAHEGVGLGHQFLRHIERTRVIVHIVDMSAMEGRDPVEDYHKINEELSQYNYRLTERPQLVVANKMDMPEANENLKRFKEALGEETKIFPVSAITKDGVRELMLAIADELEHAPEFPLHDSEEQVEGRVLYKHELPIEPFTITRGDDGVFELSGAELERAFKMTDFAREESVRRFARRMRKMGVDEALRKRGAKDGDLVRIMKFEFEFVE.

The Obg domain occupies 1 to 158 (MFVDKVKVYA…RNLLLELKVL (158 aa)). The region spanning 159-329 (ADVGLVGFPS…LMLAIADELE (171 aa)) is the OBG-type G domain. GTP-binding positions include 165-172 (GFPSVGKS), 190-194 (FTTIT), 212-215 (DLPG), 282-285 (NKMD), and 310-312 (SAI). Residues Ser172 and Thr192 each contribute to the Mg(2+) site. Residues 350 to 428 (KHELPIEPFT…IMKFEFEFVE (79 aa)) enclose the OCT domain.

Belongs to the TRAFAC class OBG-HflX-like GTPase superfamily. OBG GTPase family. As to quaternary structure, monomer. The cofactor is Mg(2+).

It is found in the cytoplasm. Its function is as follows. An essential GTPase which binds GTP, GDP and possibly (p)ppGpp with moderate affinity, with high nucleotide exchange rates and a fairly low GTP hydrolysis rate. Plays a role in control of the cell cycle, stress response, ribosome biogenesis and in those bacteria that undergo differentiation, in morphogenesis control. The sequence is that of GTPase Obg from Shouchella clausii (strain KSM-K16) (Alkalihalobacillus clausii).